We begin with the raw amino-acid sequence, 273 residues long: MTLDLQTTIEQAWENRANLSPVDASAEVRDAVEHTIDGLDLGRLRVAEKIDDQWIVHQWIKKAVLLSFRLHDNAVMGQGPLQFYDKVPTKFAGYGEAAFKAGGYRVVPPAVARRGAFIARNVVLMPSYVNIGAYVDEGTMVDTWATVGSCAQIGKNVHLSGGVGIGGVLEPLQANPTIIEDNCFIGARSEVVEGVVVEENSVLAMGVFLSQSTKIYDRATGKVSYGRVPSGSVVVPGSLPSEDGSHSLACAVIVKRVDAQTRAKTSINDLLRA.

Positions 105 and 142 each coordinate substrate.

This sequence belongs to the transferase hexapeptide repeat family. In terms of assembly, homotrimer.

Its subcellular location is the cytoplasm. The catalysed reaction is (S)-2,3,4,5-tetrahydrodipicolinate + succinyl-CoA + H2O = (S)-2-succinylamino-6-oxoheptanedioate + CoA. It functions in the pathway amino-acid biosynthesis; L-lysine biosynthesis via DAP pathway; LL-2,6-diaminopimelate from (S)-tetrahydrodipicolinate (succinylase route): step 1/3. The polypeptide is 2,3,4,5-tetrahydropyridine-2,6-dicarboxylate N-succinyltransferase (Bordetella bronchiseptica (strain ATCC BAA-588 / NCTC 13252 / RB50) (Alcaligenes bronchisepticus)).